Consider the following 615-residue polypeptide: MAESGGSSGGAGGGGAFGAGPGPERPNSTADKNGALKCTFSAPSHSTSLLQGLATLRAQGQLLDVVLTINREAFPAHKVVLAACSDYFRAMFTGGMREASQDVIELKGVSARGLRHIIDFAYSAEVTLDLDCVQDVLGAAVFLQMLPVVELCEEFLKAAMSVETCLNIGQMATTFSLASLRESVDAFTFRHFLQIAEEEDFLRLPLERLVFFLQSNRLQSCAEIDLFRAAVRWLQHDPARRPRASHVLCHIRFPLMQSSELVDSVQTLDIMVEDVLCRQYLLEAFNYQVLPFRQHEMQSPRTAVRSDVPSLVTFGGTPYTDSDRSVSSKVYQLPEPGARHFRELTEMEVGCSHTCVAVLDNFVYVAGGQHLQYRSGEGAVDACYRYDPHLNRWLRLQAMQESRIQFQLNVLCGMVYATGGRNRAGSLASVERYCPRRNEWGYACSLKRRTWGHAGAASGGRLYISGGYGISVEDKKALHCYDPVADQWEFKAPMSEPRVLHAMVGAGGRIYALGGRMDHVDRCFDVLAVEYYVPETDQWTSVSPMRAGQSEAGCCLLERKIYIVGGYNWRLNNVTGIVQVYNTDTDEWERDLHFPESFAGIACAPVLLPRAGTRR.

The segment covering 1 to 21 (MAESGGSSGGAGGGGAFGAGP) has biased composition (gly residues). Residues 1–35 (MAESGGSSGGAGGGGAFGAGPGPERPNSTADKNGA) form a disordered region. Ala-2 is subject to N-acetylalanine. A BTB domain is found at 63 to 130 (LDVVLTINRE…AYSAEVTLDL (68 aa)). Residues 165 to 266 (CLNIGQMATT…QSSELVDSVQ (102 aa)) enclose the BACK domain. Kelch repeat units follow at residues 310–361 (SLVT…VLDN), 362–413 (FVYV…VLCG), 414–460 (MVYA…ASGG), 461–508 (RLYI…GAGG), 510–559 (IYAL…LLER), and 561–608 (IYIV…PVLL).

Its function is as follows. May play a role in endo(sarco)plasmic reticulum (ER/SR) mitochondrial signaling. May be part of the ubiquitin-proteasome system (UPS) and affect ubiquitination and degradation of target substrates in cardiomyocytes. The chain is Kelch-like protein 26 (KLHL26) from Homo sapiens (Human).